The chain runs to 407 residues: GTPase Obg (407 aa).

Residues 1-159 (MKFVDEVSIR…RDLKMEMKVL (159 aa)) enclose the Obg domain. Residues 127–150 (NTRFKSSTNRAPRQTTPGKPGDQR) are disordered. Polar residues predominate over residues 129–143 (RFKSSTNRAPRQTTP). Residues 160–333 (ADVGLLGLPN…LSHDLMRYLE (174 aa)) form the OBG-type G domain. Residues 166–173 (GLPNAGKS), 191–195 (FTTLV), 213–216 (DIPG), 283–286 (NKAD), and 314–316 (SAI) each bind GTP. Residues serine 173 and threonine 193 each coordinate Mg(2+). Residues 378-407 (VKSVHDIGDDDDWDDFEDDEDGPEIIYVRD) are disordered. A compositionally biased stretch (acidic residues) spans 385 to 400 (GDDDDWDDFEDDEDGP).

Belongs to the TRAFAC class OBG-HflX-like GTPase superfamily. OBG GTPase family. In terms of assembly, monomer. The cofactor is Mg(2+).

It localises to the cytoplasm. An essential GTPase which binds GTP, GDP and possibly (p)ppGpp with moderate affinity, with high nucleotide exchange rates and a fairly low GTP hydrolysis rate. Plays a role in control of the cell cycle, stress response, ribosome biogenesis and in those bacteria that undergo differentiation, in morphogenesis control. The chain is GTPase Obg from Pseudomonas entomophila (strain L48).